The primary structure comprises 28 residues: Small spore coat assembly protein A (28 aa).

The helical transmembrane segment at 8–28 threads the bilayer; that stretch reads GFALLVVLFILLIIVGAAYIY.

Belongs to the SscA family.

It localises to the spore coat. It is found in the membrane. Functionally, spore protein involved in the assembly of several components of the spore coat, including CotB, CotG and CotH, and in spore germination. In Bacillus subtilis (strain 168), this protein is Small spore coat assembly protein A.